We begin with the raw amino-acid sequence, 161 residues long: Urease accessory protein UreE (161 aa).

Belongs to the UreE family.

Its subcellular location is the cytoplasm. Involved in urease metallocenter assembly. Binds nickel. Probably functions as a nickel donor during metallocenter assembly. The polypeptide is Urease accessory protein UreE (Pseudarthrobacter chlorophenolicus (strain ATCC 700700 / DSM 12829 / CIP 107037 / JCM 12360 / KCTC 9906 / NCIMB 13794 / A6) (Arthrobacter chlorophenolicus)).